The chain runs to 235 residues: 1-(5-phosphoribosyl)-5-[(5-phosphoribosylamino)methylideneamino] imidazole-4-carboxamide isomerase (235 aa).

The active-site Proton acceptor is the D8. D129 serves as the catalytic Proton donor.

The protein belongs to the HisA/HisF family.

Its subcellular location is the cytoplasm. It carries out the reaction 1-(5-phospho-beta-D-ribosyl)-5-[(5-phospho-beta-D-ribosylamino)methylideneamino]imidazole-4-carboxamide = 5-[(5-phospho-1-deoxy-D-ribulos-1-ylimino)methylamino]-1-(5-phospho-beta-D-ribosyl)imidazole-4-carboxamide. It participates in amino-acid biosynthesis; L-histidine biosynthesis; L-histidine from 5-phospho-alpha-D-ribose 1-diphosphate: step 4/9. The sequence is that of 1-(5-phosphoribosyl)-5-[(5-phosphoribosylamino)methylideneamino] imidazole-4-carboxamide isomerase from Thermoanaerobacter sp. (strain X514).